Here is a 327-residue protein sequence, read N- to C-terminus: GTPase Obg (327 aa).

An Obg domain is found at 1-159 (MQFIDQANII…WEVQLELKLL (159 aa)). In terms of domain architecture, OBG-type G spans 160 to 327 (AEVGIIGLPN…SLLSEVWKRI (168 aa)). ATP-binding positions include 166-173 (GLPNAGKS), 191-195 (FTTLI), 213-216 (DIPG), 280-283 (NKME), and 309-311 (SSS). Residues S173 and T193 each contribute to the Mg(2+) site.

The protein belongs to the TRAFAC class OBG-HflX-like GTPase superfamily. OBG GTPase family. Monomer. The cofactor is Mg(2+).

It is found in the cytoplasm. Functionally, an essential GTPase which binds GTP, GDP and possibly (p)ppGpp with moderate affinity, with high nucleotide exchange rates and a fairly low GTP hydrolysis rate. Plays a role in control of the cell cycle, stress response, ribosome biogenesis and in those bacteria that undergo differentiation, in morphogenesis control. The polypeptide is GTPase Obg (Prochlorococcus marinus (strain MIT 9215)).